The chain runs to 111 residues: Large ribosomal subunit protein uL22 (111 aa).

This sequence belongs to the universal ribosomal protein uL22 family. As to quaternary structure, part of the 50S ribosomal subunit.

This protein binds specifically to 23S rRNA; its binding is stimulated by other ribosomal proteins, e.g. L4, L17, and L20. It is important during the early stages of 50S assembly. It makes multiple contacts with different domains of the 23S rRNA in the assembled 50S subunit and ribosome. Its function is as follows. The globular domain of the protein is located near the polypeptide exit tunnel on the outside of the subunit, while an extended beta-hairpin is found that lines the wall of the exit tunnel in the center of the 70S ribosome. The sequence is that of Large ribosomal subunit protein uL22 from Clostridium tetani (strain Massachusetts / E88).